The following is a 349-amino-acid chain: Protein-glutamate methylesterase/protein-glutamine glutaminase 2 (349 aa).

In terms of domain architecture, Response regulatory spans 4 to 121 (SVLVVDDSAL…AEGMQAYAEE (118 aa)). Residue Asp55 is modified to 4-aspartylphosphate. Residues 151 to 343 (LLSTEKIIAL…AALLQQAARR (193 aa)) enclose the CheB-type methylesterase domain. Active-site residues include Ser163, His189, and Asp285.

It belongs to the CheB family. In terms of assembly, interacts with the C-terminal pentapeptide GWEEF of McpB. Post-translationally, phosphorylated by CheA. Phosphorylation of the N-terminal regulatory domain activates the methylesterase activity.

It is found in the cytoplasm. It catalyses the reaction [protein]-L-glutamate 5-O-methyl ester + H2O = L-glutamyl-[protein] + methanol + H(+). The catalysed reaction is L-glutaminyl-[protein] + H2O = L-glutamyl-[protein] + NH4(+). Functionally, involved in chemotaxis. Part of a chemotaxis signal transduction system that modulates chemotaxis in response to various stimuli. Catalyzes the demethylation of specific methylglutamate residues introduced into the chemoreceptors (methyl-accepting chemotaxis proteins or MCP) by CheR. Also mediates the irreversible deamidation of specific glutamine residues to glutamic acid. Acts on the methyl-accepting chemotaxis protein McpB. May be involved in a specific chemotactic response, which takes place during infection and is required for P.aeruginosa pathogenicity. This is Protein-glutamate methylesterase/protein-glutamine glutaminase 2 from Pseudomonas aeruginosa (strain ATCC 15692 / DSM 22644 / CIP 104116 / JCM 14847 / LMG 12228 / 1C / PRS 101 / PAO1).